The sequence spans 334 residues: L-lactate dehydrogenase C chain (334 aa).

NAD(+)-binding positions include 30-58 (GQVGMACAVSVLLKELADELALVDILEDK), Arg-100, and Asn-139. Residues Asn-139 and Arg-170 each contribute to the substrate site. The active-site Proton acceptor is His-194. Residue Thr-249 participates in substrate binding.

The protein belongs to the LDH/MDH superfamily. LDH family. In terms of assembly, homotetramer.

The protein localises to the cytoplasm. The enzyme catalyses (S)-lactate + NAD(+) = pyruvate + NADH + H(+). The protein operates within fermentation; pyruvate fermentation to lactate; (S)-lactate from pyruvate: step 1/1. The polypeptide is L-lactate dehydrogenase C chain (ldhc) (Xenopus laevis (African clawed frog)).